Consider the following 471-residue polypeptide: MSAVKSVSSFRLASLLRRENDPSAAMKLFRNPDPESTNPKRPFRYSLLCYDIIITKLGGSKMFDELDQVLLHLKTDTRIVPTEIIFCNVINFFGRGKLPSRALHMFDEMPQYRCQRTVKSLNSLLSALLKCGELEKMKERLSSIDEFGKPDACTYNILIHGCSQSGCFDDALKLFDEMVKKKVKPTGVTFGTLIHGLCKDSRVKEALKMKHDMLKVYGVRPTVHIYASLIKALCQIGELSFAFKLKDEAYEGKIKVDAAIYSTLISSLIKAGRSNEVSMILEEMSEKGCKPDTVTYNVLINGFCVENDSESANRVLDEMVEKGLKPDVISYNMILGVFFRIKKWEEATYLFEDMPRRGCSPDTLSYRIVFDGLCEGLQFEEAAVILDEMLFKGYKPRRDRLEGFLQKLCESGKLEILSKVISSLHRGIAGDADVWSVMIPTMCKEPVISDSIDLLLNTVKEDGPLSAMPQC.

PPR repeat units lie at residues 46-81 (SLLCYDIIITKLGGSKMFDELDQVLLHLKTDTRIVP), 82-116 (TEIIFCNVINFFGRGKLPSRALHMFDEMPQYRCQR), 117-147 (TVKSLNSLLSALLKCGELEKMKERLSSIDEF), 151-185 (DACTYNILIHGCSQSGCFDDALKLFDEMVKKKVKP), 186-221 (TGVTFGTLIHGLCKDSRVKEALKMKHDMLKVYGVRP), 222-256 (TVHIYASLIKALCQIGELSFAFKLKDEAYEGKIKV), 257-291 (DAAIYSTLISSLIKAGRSNEVSMILEEMSEKGCKP), 292-326 (DTVTYNVLINGFCVENDSESANRVLDEMVEKGLKP), 327-361 (DVISYNMILGVFFRIKKWEEATYLFEDMPRRGCSP), and 362-396 (DTLSYRIVFDGLCEGLQFEEAAVILDEMLFKGYKP).

Belongs to the PPR family. P subfamily.

In terms of biological role, involved during embryo development. The chain is Putative pentatricopeptide repeat-containing protein At1g53330 from Arabidopsis thaliana (Mouse-ear cress).